Reading from the N-terminus, the 488-residue chain is Dihydrolipoyl dehydrogenase, mitochondrial (488 aa).

Residues 1–25 constitute a mitochondrion transit peptide; that stretch reads MLRINRISNLRTFGQRFFSTEQQDV. FAD is bound by residues 52 to 61, lysine 70, glycine 134, and 163 to 165; these read EKRGKLGGTC and TGS. The cysteines at positions 61 and 66 are disulfide-linked. NAD(+) contacts are provided by residues 200-207, glutamate 223, valine 257, and glycine 294; that span reads GGGVIGLE. FAD contacts are provided by residues aspartate 335 and 341–344; that span reads MLAH. Histidine 467 functions as the Proton acceptor in the catalytic mechanism.

The protein belongs to the class-I pyridine nucleotide-disulfide oxidoreductase family. It depends on FAD as a cofactor.

It is found in the mitochondrion matrix. The catalysed reaction is N(6)-[(R)-dihydrolipoyl]-L-lysyl-[protein] + NAD(+) = N(6)-[(R)-lipoyl]-L-lysyl-[protein] + NADH + H(+). This is Dihydrolipoyl dehydrogenase, mitochondrial (lpd) from Dictyostelium discoideum (Social amoeba).